The chain runs to 205 residues: Ephrin-A1 (205 aa).

A signal peptide spans 1–18 (MEFLWAPLLGLCCSLAAA). Positions 19-151 (DRHTVFWNSS…KLKVTVSGKI (133 aa)) constitute an Ephrin RBD domain. An N-linked (GlcNAc...) asparagine glycan is attached at Asn-26. Disulfide bonds link Cys-51–Cys-92 and Cys-80–Cys-140. The GPI-anchor amidated serine moiety is linked to residue Ser-182. A propeptide spans 183–205 (AAPRLSPLAWAVLLLPFLLLQTS) (removed in mature form).

Belongs to the ephrin family. As to quaternary structure, monomer. Homodimer. Forms heterodimers with EPHA2. Binds to the receptor tyrosine kinases EPHA2, EPHA3, EPHA4, EPHA5, EPHA6 and EPHA7. Also binds with low affinity to EPHA1. Post-translationally, undergoes proteolysis by a metalloprotease to give rise to a soluble monomeric form. In terms of processing, N-Glycosylation is required for binding to EPHA2 receptor and inducing its internalization.

Its subcellular location is the cell membrane. It is found in the secreted. Its function is as follows. Cell surface GPI-bound ligand for Eph receptors, a family of receptor tyrosine kinases which are crucial for migration, repulsion and adhesion during neuronal, vascular and epithelial development. Binds promiscuously Eph receptors residing on adjacent cells, leading to contact-dependent bidirectional signaling into neighboring cells. Plays an important role in angiogenesis and tumor neovascularization. The recruitment of VAV2, VAV3 and PI3-kinase p85 subunit by phosphorylated EPHA2 is critical for EFNA1-induced RAC1 GTPase activation and vascular endothelial cell migration and assembly. Exerts anti-oncogenic effects in tumor cells through activation and down-regulation of EPHA2. Activates EPHA2 by inducing tyrosine phosphorylation which leads to its internalization and degradation. Acts as a negative regulator in the tumorigenesis of gliomas by down-regulating EPHA2 and FAK. Can evoke collapse of embryonic neuronal growth cone and regulates dendritic spine morphogenesis. In Sus scrofa (Pig), this protein is Ephrin-A1 (EFNA1).